Here is a 286-residue protein sequence, read N- to C-terminus: 4-hydroxybenzoate octaprenyltransferase (286 aa).

A run of 7 helical transmembrane segments spans residues 21–40 (GTLLLMWPCLMALMLAAGGM), 95–115 (ILFVVLGLSAFGLVLLLNGLV), 142–162 (FLGVVWSWSIPMAYAAQTGEV), 167–187 (WWLFAANWFWTVAYDTMYAMV), 211–231 (IIGLFQIAALVCFIAAGWSAE), 235–255 (LYGLGLLTFVGFSTYQQMLIF), and 266–286 (FLNNNWAGLALFVGLGADYLI).

This sequence belongs to the UbiA prenyltransferase family. The cofactor is Mg(2+).

The protein localises to the cell inner membrane. The catalysed reaction is all-trans-octaprenyl diphosphate + 4-hydroxybenzoate = 4-hydroxy-3-(all-trans-octaprenyl)benzoate + diphosphate. The protein operates within cofactor biosynthesis; ubiquinone biosynthesis. Functionally, catalyzes the prenylation of para-hydroxybenzoate (PHB) with an all-trans polyprenyl group. Mediates the second step in the final reaction sequence of ubiquinone-8 (UQ-8) biosynthesis, which is the condensation of the polyisoprenoid side chain with PHB, generating the first membrane-bound Q intermediate 3-octaprenyl-4-hydroxybenzoate. This Shewanella putrefaciens (strain CN-32 / ATCC BAA-453) protein is 4-hydroxybenzoate octaprenyltransferase.